The primary structure comprises 206 residues: Thiamine-phosphate synthase (206 aa).

4-amino-2-methyl-5-(diphosphooxymethyl)pyrimidine is bound by residues glutamine 33–lysine 37 and asparagine 65. Mg(2+) contacts are provided by aspartate 66 and aspartate 85. A 4-amino-2-methyl-5-(diphosphooxymethyl)pyrimidine-binding site is contributed by threonine 104. Residue threonine 130–threonine 132 participates in 2-[(2R,5Z)-2-carboxy-4-methylthiazol-5(2H)-ylidene]ethyl phosphate binding. Lysine 133 contributes to the 4-amino-2-methyl-5-(diphosphooxymethyl)pyrimidine binding site. Glycine 166 is a 2-[(2R,5Z)-2-carboxy-4-methylthiazol-5(2H)-ylidene]ethyl phosphate binding site.

This sequence belongs to the thiamine-phosphate synthase family. Mg(2+) is required as a cofactor.

It catalyses the reaction 2-[(2R,5Z)-2-carboxy-4-methylthiazol-5(2H)-ylidene]ethyl phosphate + 4-amino-2-methyl-5-(diphosphooxymethyl)pyrimidine + 2 H(+) = thiamine phosphate + CO2 + diphosphate. The catalysed reaction is 2-(2-carboxy-4-methylthiazol-5-yl)ethyl phosphate + 4-amino-2-methyl-5-(diphosphooxymethyl)pyrimidine + 2 H(+) = thiamine phosphate + CO2 + diphosphate. It carries out the reaction 4-methyl-5-(2-phosphooxyethyl)-thiazole + 4-amino-2-methyl-5-(diphosphooxymethyl)pyrimidine + H(+) = thiamine phosphate + diphosphate. It participates in cofactor biosynthesis; thiamine diphosphate biosynthesis; thiamine phosphate from 4-amino-2-methyl-5-diphosphomethylpyrimidine and 4-methyl-5-(2-phosphoethyl)-thiazole: step 1/1. Functionally, condenses 4-methyl-5-(beta-hydroxyethyl)thiazole monophosphate (THZ-P) and 2-methyl-4-amino-5-hydroxymethyl pyrimidine pyrophosphate (HMP-PP) to form thiamine monophosphate (TMP). This Flavobacterium psychrophilum (strain ATCC 49511 / DSM 21280 / CIP 103535 / JIP02/86) protein is Thiamine-phosphate synthase.